Consider the following 1029-residue polypeptide: Beta-galactosidase (1029 aa).

Substrate is bound by residues N108 and D207. A Na(+)-binding site is contributed by D207. Mg(2+) is bound by residues E422, H424, and E467. Substrate is bound by residues E467 and 543 to 546 (EYAH). The Proton donor role is filled by E467. The active-site Nucleophile is the E543. N603 is a Mg(2+) binding site. Na(+) is bound by residues F607 and N610. Substrate-binding residues include N610 and W1005.

The protein belongs to the glycosyl hydrolase 2 family. Homotetramer. The cofactor is Mg(2+). Na(+) is required as a cofactor.

The enzyme catalyses Hydrolysis of terminal non-reducing beta-D-galactose residues in beta-D-galactosides.. The sequence is that of Beta-galactosidase from Escherichia coli.